Here is a 251-residue protein sequence, read N- to C-terminus: Ubiquinone/menaquinone biosynthesis C-methyltransferase UbiE (251 aa).

S-adenosyl-L-methionine-binding positions include T74, D95, and 123–124 (NA).

This sequence belongs to the class I-like SAM-binding methyltransferase superfamily. MenG/UbiE family.

It carries out the reaction a 2-demethylmenaquinol + S-adenosyl-L-methionine = a menaquinol + S-adenosyl-L-homocysteine + H(+). The catalysed reaction is a 2-methoxy-6-(all-trans-polyprenyl)benzene-1,4-diol + S-adenosyl-L-methionine = a 5-methoxy-2-methyl-3-(all-trans-polyprenyl)benzene-1,4-diol + S-adenosyl-L-homocysteine + H(+). The protein operates within quinol/quinone metabolism; menaquinone biosynthesis; menaquinol from 1,4-dihydroxy-2-naphthoate: step 2/2. Its pathway is cofactor biosynthesis; ubiquinone biosynthesis. Its function is as follows. Methyltransferase required for the conversion of demethylmenaquinol (DMKH2) to menaquinol (MKH2) and the conversion of 2-polyprenyl-6-methoxy-1,4-benzoquinol (DDMQH2) to 2-polyprenyl-3-methyl-6-methoxy-1,4-benzoquinol (DMQH2). This chain is Ubiquinone/menaquinone biosynthesis C-methyltransferase UbiE, found in Shewanella oneidensis (strain ATCC 700550 / JCM 31522 / CIP 106686 / LMG 19005 / NCIMB 14063 / MR-1).